A 142-amino-acid chain; its full sequence is Small ribosomal subunit protein bS6 (142 aa).

The span at 110–133 (NKKPSHAKEKHEKTEHTHSHHTEE) shows a compositional bias: basic and acidic residues. The interval 110–142 (NKKPSHAKEKHEKTEHTHSHHTEETESVGSHSK) is disordered.

Belongs to the bacterial ribosomal protein bS6 family.

Its function is as follows. Binds together with bS18 to 16S ribosomal RNA. This is Small ribosomal subunit protein bS6 from Helicobacter pylori (strain Shi470).